A 406-amino-acid chain; its full sequence is Subtilisin-like protease CPC735_023170 (406 aa).

An N-terminal signal peptide occupies residues 1–20; it reads MRLFQSTCVLVGTVLPLFTA. The propeptide occupies 21 to 118; the sequence is FPISSPREIE…VEPDSMAYVT (98 aa). The Inhibitor I9 domain maps to 35 to 115; it reads KYIITFKKGI…VESVEPDSMA (81 aa). An N-linked (GlcNAc...) asparagine glycan is attached at N125. A Peptidase S8 domain is found at 127-406; the sequence is TYGPRRISHR…NKLAYNGSGK (280 aa). Residues D161 and H192 each act as charge relay system in the active site. N239 carries N-linked (GlcNAc...) asparagine glycosylation. The tract at residues 283–309 is disordered; the sequence is NDGRDAGRNSPGSAPESITVGSINSRR. Residue N346 is glycosylated (N-linked (GlcNAc...) asparagine). S351 acts as the Charge relay system in catalysis. Residue N402 is glycosylated (N-linked (GlcNAc...) asparagine).

It belongs to the peptidase S8 family.

The protein localises to the secreted. Functionally, secreted subtilisin-like serine protease with keratinolytic activity that contributes to pathogenicity. This Coccidioides posadasii (strain C735) (Valley fever fungus) protein is Subtilisin-like protease CPC735_023170.